We begin with the raw amino-acid sequence, 372 residues long: Putative glutamate--cysteine ligase 2 (372 aa).

It belongs to the glutamate--cysteine ligase type 2 family. YbdK subfamily. In terms of assembly, homodimer.

It carries out the reaction L-cysteine + L-glutamate + ATP = gamma-L-glutamyl-L-cysteine + ADP + phosphate + H(+). Its function is as follows. ATP-dependent carboxylate-amine ligase which exhibits weak glutamate--cysteine ligase activity. This Salmonella paratyphi A (strain AKU_12601) protein is Putative glutamate--cysteine ligase 2 (ybdK).